The primary structure comprises 270 residues: 2-epi-5-epi-valiolone 7-phosphate 2-epimerase (270 aa).

Active-site proton donor/acceptor residues include Glu-143 and Glu-236.

The protein belongs to the hyi family.

The enzyme catalyses 2-epi-5-epi-valiolone 7-phosphate = 5-epi-valiolone 7-phosphate. Involved in the biosynthesis of the alpha-glucosidase inhibitor acarbose. Catalyzes the 2-epimerisation of 2-epi-5-epivaliolone 7-phosphate to yield 5-epi-valiolone 7-phosphate. In Actinoplanes sp. (strain ATCC 31044 / CBS 674.73 / SE50/110), this protein is 2-epi-5-epi-valiolone 7-phosphate 2-epimerase (acbO).